The sequence spans 349 residues: Selenide, water dikinase (349 aa).

Sec-19 is an active-site residue. Residue Sec-19 is a non-standard amino acid, selenocysteine. Residues Lys-22 and Leu-50–Asp-52 each bind ATP. Asp-53 lines the Mg(2+) pocket. ATP contacts are provided by residues Asp-69, Asp-92, and Gly-140–Thr-142. Asp-92 is a binding site for Mg(2+). Asp-246 serves as a coordination point for Mg(2+).

The protein belongs to the selenophosphate synthase 1 family. Class I subfamily. As to quaternary structure, homodimer. Mg(2+) serves as cofactor.

It carries out the reaction hydrogenselenide + ATP + H2O = selenophosphate + AMP + phosphate + 2 H(+). Functionally, synthesizes selenophosphate from selenide and ATP. This is Selenide, water dikinase from Methanocaldococcus jannaschii (strain ATCC 43067 / DSM 2661 / JAL-1 / JCM 10045 / NBRC 100440) (Methanococcus jannaschii).